Consider the following 700-residue polypeptide: Pentatricopeptide repeat-containing protein At3g26540 (700 aa).

PPR repeat units lie at residues 95 to 125 (PIFLLNRAIEAYGKCGCVDDARELFEEMPER), 126 to 160 (DGGSWNAVITACAQNGVSDEVFRMFRRMNRDGVRA), 161 to 195 (TETSFAGVLKSCGLILDLRLLRQLHCAVVKYGYSG), 196 to 226 (NVDLETSIVDVYGKCRVMSDARRVFDEIVNP), 227 to 261 (SDVSWNVIVRRYLEMGFNDEAVVMFFKMLELNVRP), 262 to 296 (LNHTVSSVMLACSRSLALEVGKVIHAIAVKLSVVA), 297 to 327 (DTVVSTSVFDMYVKCDRLESARRVFDQTRSK), 328 to 362 (DLKSWTSAMSGYAMSGLTREARELFDLMPERNIVS), 363 to 389 (WNAMLGGYVHAHEWDEALDFLTLMRQE), 394 to 428 (DNVTLVWILNVCSGISDVQMGKQAHGFIYRHGYDT), 429 to 459 (NVIVANALLDMYGKCGTLQSANIWFRQMSEL), 461 to 495 (DEVSWNALLTGVARVGRSEQALSFFEGMQVEAKPS), 497 to 529 (YTLATLLAGCANIPALNLGKAIHGFLIRDGYKI), 530 to 560 (DVVIRGAMVDMYSKCRCFDYAIEVFKEAATR), 561 to 595 (DLILWNSIIRGCCRNGRSKEVFELFMLLENEGVKP), 596 to 626 (DHVTFLGILQACIREGHVELGFQYFSSMSTK), and 632 to 662 (QVEHYDCMIELYCKYGCLHQLEEFLLLMPFD).

It belongs to the PPR family. PCMP-A subfamily.

The sequence is that of Pentatricopeptide repeat-containing protein At3g26540 (PCMP-A5) from Arabidopsis thaliana (Mouse-ear cress).